Consider the following 426-residue polypeptide: Enolase (426 aa).

Q165 serves as a coordination point for (2R)-2-phosphoglycerate. E209 acts as the Proton donor in catalysis. Mg(2+) contacts are provided by D244, E287, and D313. (2R)-2-phosphoglycerate is bound by residues K338, R367, S368, and K389. K338 functions as the Proton acceptor in the catalytic mechanism.

This sequence belongs to the enolase family. Mg(2+) is required as a cofactor.

The protein localises to the cytoplasm. It is found in the secreted. Its subcellular location is the cell surface. It carries out the reaction (2R)-2-phosphoglycerate = phosphoenolpyruvate + H2O. It functions in the pathway carbohydrate degradation; glycolysis; pyruvate from D-glyceraldehyde 3-phosphate: step 4/5. In terms of biological role, catalyzes the reversible conversion of 2-phosphoglycerate (2-PG) into phosphoenolpyruvate (PEP). It is essential for the degradation of carbohydrates via glycolysis. In Methanococcus maripaludis (strain C5 / ATCC BAA-1333), this protein is Enolase.